Here is a 370-residue protein sequence, read N- to C-terminus: Histidinol-phosphate aminotransferase (370 aa).

An N6-(pyridoxal phosphate)lysine modification is found at lysine 231.

It belongs to the class-II pyridoxal-phosphate-dependent aminotransferase family. Histidinol-phosphate aminotransferase subfamily. Homodimer. Pyridoxal 5'-phosphate serves as cofactor.

It catalyses the reaction L-histidinol phosphate + 2-oxoglutarate = 3-(imidazol-4-yl)-2-oxopropyl phosphate + L-glutamate. It participates in amino-acid biosynthesis; L-histidine biosynthesis; L-histidine from 5-phospho-alpha-D-ribose 1-diphosphate: step 7/9. The sequence is that of Histidinol-phosphate aminotransferase from Paracidovorax citrulli (strain AAC00-1) (Acidovorax citrulli).